A 239-amino-acid polypeptide reads, in one-letter code: Glutathione S-transferase verG (239 aa).

The 84-residue stretch at 18–101 folds into the GST N-terminal domain; the sequence is KPLIFVMEGR…YLSNKYDAKR (84 aa). In terms of domain architecture, GST C-terminal spans 107 to 237; sequence NAAENLEICN…ELDSRKEIAI (131 aa).

Belongs to the GST superfamily.

The catalysed reaction is RX + glutathione = an S-substituted glutathione + a halide anion + H(+). Its pathway is mycotoxin biosynthesis. Functionally, glutathione S-transferase; part of the gene cluster that mediates the biosynthesis of 11'-deoxyverticillin A, one of the dimeric epipolythiodioxopiperazines (ETPs) from the verticillin family that act as mycotoxins. 11'-deoxyverticillin A is required for normal conidiation. The nonribosomal peptide synthetase verP is speculated to be responsible for condensation of amino acids to form the carbon skeleton of verticillin, whereas the cluster-specific tailoring enzymes are involved in further modifications leading to the production of 11'-deoxyverticillin A. The protein is Glutathione S-transferase verG of Clonostachys rogersoniana.